Consider the following 217-residue polypeptide: Somatotropin (217 aa).

The N-terminal stretch at 1–26 (MATGSRTSLLLAFTLLCLPQLKEAGA) is a signal peptide. His-44 lines the Zn(2+) pocket. Cys-79 and Cys-191 form a disulfide bridge. Ser-132 carries the post-translational modification Phosphoserine. Glu-200 lines the Zn(2+) pocket. Cys-208 and Cys-215 are oxidised to a cystine.

Belongs to the somatotropin/prolactin family.

Its subcellular location is the secreted. Plays an important role in growth control. Its major role in stimulating body growth is to stimulate the liver and other tissues to secrete IGF1. It stimulates both the differentiation and proliferation of myoblasts. It also stimulates amino acid uptake and protein synthesis in muscle and other tissues. This is Somatotropin (GH1) from Saimiri boliviensis boliviensis (Bolivian squirrel monkey).